Reading from the N-terminus, the 338-residue chain is Tryptophan--tRNA ligase (338 aa).

ATP-binding positions include 11–13 (QPS) and 19–20 (GN). A 'HIGH' region motif is present at residues 12–20 (PSGELSIGN). Residue aspartate 135 coordinates L-tryptophan. Residues 147–149 (GSD), valine 189, and 198–202 (KMSKS) contribute to the ATP site. The 'KMSKS' region signature appears at 198 to 202 (KMSKS).

This sequence belongs to the class-I aminoacyl-tRNA synthetase family. As to quaternary structure, homodimer.

Its subcellular location is the cytoplasm. The enzyme catalyses tRNA(Trp) + L-tryptophan + ATP = L-tryptophyl-tRNA(Trp) + AMP + diphosphate + H(+). Functionally, catalyzes the attachment of tryptophan to tRNA(Trp). The chain is Tryptophan--tRNA ligase from Vibrio vulnificus (strain YJ016).